Here is a 116-residue protein sequence, read N- to C-terminus: uncharacterized protein (116 aa).

The Extracellular portion of the chain corresponds to 1-46 (MGDNTTVAPGTNQTLVEEDLGAQITHTLMVQIMSKLNEMLTEYQPQ). N-linked (GlcNAc...) asparagine; by host glycosylation is found at Asn4 and Asn12. The chain crosses the membrane as a helical span at residues 47–67 (IIGIGATVLAIFVIMFISLLI). The Cytoplasmic portion of the chain corresponds to 68–116 (ILGCNCIRPYNFKNLKRYITGKASKSVEYQPLKMSAVNMGMDEDDEFLA).

It is found in the host membrane. This is an uncharacterized protein from Magallana gigas (Pacific oyster).